The primary structure comprises 296 residues: Small ribosomal subunit biogenesis GTPase RsgA (296 aa).

Residues 63-224 (KNQLVRPMVA…IADTPGFSSY (162 aa)) enclose the CP-type G domain. Residues 112–115 (SKTD) and 167–175 (GQTGAGKST) each bind GTP. Cys248, Cys253, His255, and Cys261 together coordinate Zn(2+).

Belongs to the TRAFAC class YlqF/YawG GTPase family. RsgA subfamily. As to quaternary structure, monomer. Associates with 30S ribosomal subunit, binds 16S rRNA. Requires Zn(2+) as cofactor.

The protein localises to the cytoplasm. Functionally, one of several proteins that assist in the late maturation steps of the functional core of the 30S ribosomal subunit. Helps release RbfA from mature subunits. May play a role in the assembly of ribosomal proteins into the subunit. Circularly permuted GTPase that catalyzes slow GTP hydrolysis, GTPase activity is stimulated by the 30S ribosomal subunit. The polypeptide is Small ribosomal subunit biogenesis GTPase RsgA (Limosilactobacillus fermentum (strain NBRC 3956 / LMG 18251) (Lactobacillus fermentum)).